The primary structure comprises 178 residues: uncharacterized protein (178 aa).

In terms of domain architecture, MSP spans 52-177 (HIAIEDRAHQ…RRLPASFLST (126 aa)).

This is an uncharacterized protein from Caenorhabditis elegans.